A 400-amino-acid polypeptide reads, in one-letter code: Dehydrogenase efuE (400 aa).

NAD(+) is bound by residues 222-223 (AI), 303-305 (TAR), and Asp329. Arg305 is a catalytic residue. Glu334 is an active-site residue. His352 serves as the catalytic Proton donor. 352–355 (HLGG) serves as a coordination point for NAD(+).

It belongs to the D-isomer specific 2-hydroxyacid dehydrogenase family.

The protein operates within secondary metabolite biosynthesis; terpenoid biosynthesis. Its function is as follows. Dehydrogenase; part of the gene cluster that mediates the biosynthesis of enfumafungin, a glycosylated fernene-type triterpenoid with potent antifungal activity, mediated by its interaction with beta-1,3-glucan synthase and the fungal cell wall. The pathway begins with the terpene cyclase-glycosyl transferase fusion protein that most likely uses 2,3-oxidosqualene as substrate and catalyzes glycosylation immediately after cyclization. The fernene glycoside then could be processed by the desaturase efuI which catalyzes isomerization of a double bond established by efuA to form the core structure. The latter would then undergo a series of hydroxylations in unknown order at C-2, C-19, C-23 and C-25, which would be catalyzed by two of the three cytochrome P450 monooxygenases efuB, efuG or efuH. The hydroxy-group at C-25 becomes oxidized by the dehydrogenase efuE to enable a spontaneous, non-enzymatic hemiacetal formation with C-23. After hydroxylation at C-2, acetylation by the acetyltransferase efuC takes place. The final steps in enfumafungin biosynthesis require expansion of the 5-membered ring by lactonization via a Baeyer-Villiger reaction mediated by one of the BGC's cytochrome P450 monooxygenases (efuB, efuG or efuH) followed by ring cleavage. This type of reaction would establish a double bond between C-20 and C-21 which could be reduced by the reductase efuL to form the final product. The polypeptide is Dehydrogenase efuE (Hormonema carpetanum).